The primary structure comprises 340 residues: tRNA N6-adenosine threonylcarbamoyltransferase (340 aa).

Histidine 111 and histidine 115 together coordinate Fe cation. Substrate is bound by residues 134 to 138 (LVSGG), aspartate 167, glycine 180, and asparagine 276. Aspartate 304 contacts Fe cation.

It belongs to the KAE1 / TsaD family. Requires Fe(2+) as cofactor.

It is found in the cytoplasm. It catalyses the reaction L-threonylcarbamoyladenylate + adenosine(37) in tRNA = N(6)-L-threonylcarbamoyladenosine(37) in tRNA + AMP + H(+). Functionally, required for the formation of a threonylcarbamoyl group on adenosine at position 37 (t(6)A37) in tRNAs that read codons beginning with adenine. Is involved in the transfer of the threonylcarbamoyl moiety of threonylcarbamoyl-AMP (TC-AMP) to the N6 group of A37, together with TsaE and TsaB. TsaD likely plays a direct catalytic role in this reaction. In Helicobacter pylori (strain J99 / ATCC 700824) (Campylobacter pylori J99), this protein is tRNA N6-adenosine threonylcarbamoyltransferase.